The sequence spans 317 residues: Aspartate carbamoyltransferase catalytic subunit (317 aa).

Carbamoyl phosphate is bound by residues Arg55 and Thr56. Position 83 (Lys83) interacts with L-aspartate. Positions 105, 138, and 141 each coordinate carbamoyl phosphate. Positions 171 and 225 each coordinate L-aspartate. Positions 266 and 267 each coordinate carbamoyl phosphate.

Belongs to the aspartate/ornithine carbamoyltransferase superfamily. ATCase family. As to quaternary structure, heterododecamer (2C3:3R2) of six catalytic PyrB chains organized as two trimers (C3), and six regulatory PyrI chains organized as three dimers (R2).

It catalyses the reaction carbamoyl phosphate + L-aspartate = N-carbamoyl-L-aspartate + phosphate + H(+). The protein operates within pyrimidine metabolism; UMP biosynthesis via de novo pathway; (S)-dihydroorotate from bicarbonate: step 2/3. Functionally, catalyzes the condensation of carbamoyl phosphate and aspartate to form carbamoyl aspartate and inorganic phosphate, the committed step in the de novo pyrimidine nucleotide biosynthesis pathway. This Mycobacteroides abscessus (strain ATCC 19977 / DSM 44196 / CCUG 20993 / CIP 104536 / JCM 13569 / NCTC 13031 / TMC 1543 / L948) (Mycobacterium abscessus) protein is Aspartate carbamoyltransferase catalytic subunit.